Consider the following 312-residue polypeptide: Undecaprenyl-diphosphatase (312 aa).

7 helical membrane-spanning segments follow: residues 74-94, 122-142, 154-174, 183-203, 226-246, 254-274, and 288-308; these read GVAFTAVIQLGSIVSIVWYFW, VSIGLGTIPIVFFGLLIKVFI, VAIAIASIIMALLLVIAERIG, LDIRDGIVIGLAQVLALIPGV, FSFLLGLPAITLAGLVELKTL, VGLVATLTGVFSAIIFSYIAI, and IFIWYRLAFGILILIGIISGV.

Belongs to the UppP family.

It is found in the cell inner membrane. It carries out the reaction di-trans,octa-cis-undecaprenyl diphosphate + H2O = di-trans,octa-cis-undecaprenyl phosphate + phosphate + H(+). In terms of biological role, catalyzes the dephosphorylation of undecaprenyl diphosphate (UPP). Confers resistance to bacitracin. In Trichodesmium erythraeum (strain IMS101), this protein is Undecaprenyl-diphosphatase.